The chain runs to 293 residues: Glycine N-methyltransferase (293 aa).

At V2 the chain carries N-acetylvaline. (6S)-5-methyl-5,6,7,8-tetrahydrofolate is bound by residues S4 and Y6. Phosphoserine is present on S10. 4 residues coordinate S-adenosyl-L-methionine: Y22, W31, Y34, and R41. The residue at position 34 (Y34) is a Phosphotyrosine. K46 carries the post-translational modification N6-succinyllysine. Residues A65, 86-88 (DAS), 117-118 (NW), L137, 137-140 (LGNS), and R176 contribute to the S-adenosyl-L-methionine site. K191, K196, and K201 each carry N6-succinyllysine. A (6S)-5-methyl-5,6,7,8-tetrahydrofolate-binding site is contributed by H215. Y221 contacts S-adenosyl-L-methionine. R240 provides a ligand contact to (6S)-5-methyl-5,6,7,8-tetrahydrofolate.

The protein belongs to the class I-like SAM-binding methyltransferase superfamily. Glycine N-methyltransferase family. In terms of assembly, homotetramer.

Its subcellular location is the cytoplasm. The enzyme catalyses glycine + S-adenosyl-L-methionine = sarcosine + S-adenosyl-L-homocysteine + H(+). Its activity is regulated as follows. Inhibited by 5-methyltetrahydrofolate monoglutamate and by 5-methyltetrahydrofolate pentaglutamate, inhibition is much more effective by the pentaglutamate form than by the monoglutamate form. Two molecules of 5-methyltetrahydrofolate are bound per tetramer. The binding sites are localized between subunits. Inhibitor binding may preclude movements of the polypeptide chain that are necessary for enzyme activity. In terms of biological role, catalyzes the methylation of glycine by using S-adenosylmethionine (AdoMet) to form N-methylglycine (sarcosine) with the concomitant production of S-adenosylhomocysteine (AdoHcy), a reaction regulated by the binding of 5-methyltetrahydrofolate. Plays an important role in the regulation of methyl group metabolism by regulating the ratio between S-adenosyl-L-methionine and S-adenosyl-L-homocysteine. The polypeptide is Glycine N-methyltransferase (Gnmt) (Mus musculus (Mouse)).